Here is a 314-residue protein sequence, read N- to C-terminus: Deoxymugineic acid synthase 1 (314 aa).

The tract at residues 1–21 (MGAGDRTVAGMPRIGMGTAVQ) is disordered. Asp-44 is an NADP(+) binding site. Tyr-49 (proton donor) is an active-site residue. His-112 lines the substrate pocket. NADP(+) is bound by residues 158–159 (AN), Gln-180, 258–266 (FDEARMREN), and 273–281 (ELTEEERRR).

Belongs to the aldo/keto reductase family.

It catalyses the reaction 2'-deoxymugineate + NAD(+) = 3''-deamino-3''-oxonicotianamine + NADH + H(+). It carries out the reaction 2'-deoxymugineate + NADP(+) = 3''-deamino-3''-oxonicotianamine + NADPH + H(+). Its pathway is siderophore biosynthesis. Functionally, catalyzes the reduction of a 3''-keto intermediate during the biosynthesis of 2'-deoxymugineic acid (DMA) from L-Met. Involved in the formation of phytosiderophores (MAs) belonging to the mugineic acid family and required to acquire iron. This chain is Deoxymugineic acid synthase 1, found in Hordeum vulgare (Barley).